Consider the following 314-residue polypeptide: Homoserine kinase (314 aa).

96 to 106 (PIGSGLGSSAC) lines the ATP pocket.

Belongs to the GHMP kinase family. Homoserine kinase subfamily.

Its subcellular location is the cytoplasm. The catalysed reaction is L-homoserine + ATP = O-phospho-L-homoserine + ADP + H(+). It functions in the pathway amino-acid biosynthesis; L-threonine biosynthesis; L-threonine from L-aspartate: step 4/5. Its function is as follows. Catalyzes the ATP-dependent phosphorylation of L-homoserine to L-homoserine phosphate. This Haemophilus influenzae (strain 86-028NP) protein is Homoserine kinase.